The sequence spans 515 residues: Heavy metal-associated isoprenylated plant protein 41 (515 aa).

The region spanning 376 to 444 (KQRIVLKMDM…KVCMTTIITV (69 aa)) is the HMA domain. Position 512 is a cysteine methyl ester (cysteine 512). Cysteine 512 carries S-farnesyl cysteine lipidation. The propeptide at 513-515 (RIL) is removed in mature form.

This sequence belongs to the HIPP family.

Functionally, heavy-metal-binding protein. The chain is Heavy metal-associated isoprenylated plant protein 41 from Arabidopsis thaliana (Mouse-ear cress).